A 313-amino-acid polypeptide reads, in one-letter code: Acetaldehyde dehydrogenase (313 aa).

Position 12–15 (12–15) interacts with NAD(+); it reads SGNI. Cysteine 132 serves as the catalytic Acyl-thioester intermediate. NAD(+) contacts are provided by residues 163–171 and asparagine 291; that span reads SAGPGTRAN.

This sequence belongs to the acetaldehyde dehydrogenase family.

The catalysed reaction is acetaldehyde + NAD(+) + CoA = acetyl-CoA + NADH + H(+). This Burkholderia cepacia (Pseudomonas cepacia) protein is Acetaldehyde dehydrogenase (bphG).